Consider the following 349-residue polypeptide: S-adenosylmethionine:tRNA ribosyltransferase-isomerase (349 aa).

The protein belongs to the QueA family. In terms of assembly, monomer.

It localises to the cytoplasm. The catalysed reaction is 7-aminomethyl-7-carbaguanosine(34) in tRNA + S-adenosyl-L-methionine = epoxyqueuosine(34) in tRNA + adenine + L-methionine + 2 H(+). It functions in the pathway tRNA modification; tRNA-queuosine biosynthesis. Functionally, transfers and isomerizes the ribose moiety from AdoMet to the 7-aminomethyl group of 7-deazaguanine (preQ1-tRNA) to give epoxyqueuosine (oQ-tRNA). This chain is S-adenosylmethionine:tRNA ribosyltransferase-isomerase, found in Ruegeria sp. (strain TM1040) (Silicibacter sp.).